A 208-amino-acid chain; its full sequence is Uracil phosphoribosyltransferase (208 aa).

Residues Arg-78, Arg-103, and 130-138 (DPMLATGGT) each bind 5-phospho-alpha-D-ribose 1-diphosphate. Uracil is bound by residues Ile-193 and 198 to 200 (GDA). A 5-phospho-alpha-D-ribose 1-diphosphate-binding site is contributed by Asp-199.

Belongs to the UPRTase family. Mg(2+) is required as a cofactor.

It carries out the reaction UMP + diphosphate = 5-phospho-alpha-D-ribose 1-diphosphate + uracil. The protein operates within pyrimidine metabolism; UMP biosynthesis via salvage pathway; UMP from uracil: step 1/1. Allosterically activated by GTP. Its function is as follows. Catalyzes the conversion of uracil and 5-phospho-alpha-D-ribose 1-diphosphate (PRPP) to UMP and diphosphate. The sequence is that of Uracil phosphoribosyltransferase from Nitratidesulfovibrio vulgaris (strain ATCC 29579 / DSM 644 / CCUG 34227 / NCIMB 8303 / VKM B-1760 / Hildenborough) (Desulfovibrio vulgaris).